Here is a 507-residue protein sequence, read N- to C-terminus: Prolyl carboxy peptidase like protein 5 (507 aa).

A signal peptide spans 1-16 (MNIFISLAILIATTHC). N-linked (GlcNAc...) asparagine glycosylation is present at asparagine 125. Serine 172 (charge relay system) is an active-site residue. 2 N-linked (GlcNAc...) asparagine glycosylation sites follow: asparagine 332 and asparagine 407. Residues aspartate 439 and histidine 466 each act as charge relay system in the active site.

This sequence belongs to the peptidase S28 family.

The protein is Prolyl carboxy peptidase like protein 5 of Caenorhabditis elegans.